Reading from the N-terminus, the 330-residue chain is Ketol-acid reductoisomerase (NADP(+)) (330 aa).

One can recognise a KARI N-terminal Rossmann domain in the interval 3-184; sequence LPVYYDKDID…GGGRMGVLET (182 aa). NADP(+) contacts are provided by residues 26-29, Ser52, and Ser54; that span reads YGAQ. The active site involves His109. Residue Gly135 participates in NADP(+) binding. In terms of domain architecture, KARI C-terminal knotted spans 185–329; the sequence is SFKEECESDL…EILRAPFNHK (145 aa). 4 residues coordinate Mg(2+): Asp193, Glu197, Glu229, and Glu233. Substrate is bound at residue Ser254.

The protein belongs to the ketol-acid reductoisomerase family. Mg(2+) serves as cofactor.

It catalyses the reaction (2R)-2,3-dihydroxy-3-methylbutanoate + NADP(+) = (2S)-2-acetolactate + NADPH + H(+). The catalysed reaction is (2R,3R)-2,3-dihydroxy-3-methylpentanoate + NADP(+) = (S)-2-ethyl-2-hydroxy-3-oxobutanoate + NADPH + H(+). It functions in the pathway amino-acid biosynthesis; L-isoleucine biosynthesis; L-isoleucine from 2-oxobutanoate: step 2/4. The protein operates within amino-acid biosynthesis; L-valine biosynthesis; L-valine from pyruvate: step 2/4. Involved in the biosynthesis of branched-chain amino acids (BCAA). Catalyzes an alkyl-migration followed by a ketol-acid reduction of (S)-2-acetolactate (S2AL) to yield (R)-2,3-dihydroxy-isovalerate. In the isomerase reaction, S2AL is rearranged via a Mg-dependent methyl migration to produce 3-hydroxy-3-methyl-2-ketobutyrate (HMKB). In the reductase reaction, this 2-ketoacid undergoes a metal-dependent reduction by NADPH to yield (R)-2,3-dihydroxy-isovalerate. The polypeptide is Ketol-acid reductoisomerase (NADP(+)) (Helicobacter pylori (strain Shi470)).